A 453-amino-acid polypeptide reads, in one-letter code: Serine/threonine-protein phosphatase 2A 55 kDa regulatory subunit B delta isoform (453 aa).

WD repeat units follow at residues 32 to 71 (AEADIISTVEFNYSGDLLATGDKGGRVVIFQREQENKGRA), 97 to 138 (EIEE…KRAE), 181 to 219 (AHTYHINSISVNSDHETYLSADDLRINLWHLEITDRSFN), and 230 to 270 (ELTE…LCDR). A Phosphoserine modification is found at S285. WD repeat units follow at residues 289-327 (EIISSISDVKFSHSGRYMMTRDYLSVKVWDLNMEGRPVE), 344-385 (ENDC…DVTL), and 420-452 (DFNKKILHTAWHPMESIIAVAATNNLYIFQDKI). Position 305 is a phosphotyrosine (Y305). Position 308 is a phosphothreonine (T308). The interval 385–406 (LEASRENSKPRASLKPRKVCSG) is disordered.

Belongs to the phosphatase 2A regulatory subunit B family. PP2A consists of a common heterodimeric core enzyme, composed of a 36 kDa catalytic subunit (subunit C) and a 65 kDa constant regulatory subunit (PR65 or subunit A), that associates with a variety of regulatory subunits. Proteins that associate with the core dimer include three families of regulatory subunits B (the R2/B/PR55/B55, R3/B''/PR72/PR130/PR59 and R5/B'/B56 families), the 48 kDa variable regulatory subunit, viral proteins, and cell signaling molecules. Interacts with ENSA (when phosphorylated at 'Ser-67') and ARPP19 (when phosphorylated at 'Ser-62'), leading to inhibit PP2A activity. Interacts with IER5. In terms of tissue distribution, widely expressed with high levels in brain, heart, placenta, skeletal muscle, testis, thymus and spleen.

It localises to the cytoplasm. Its function is as follows. Substrate-recognition subunit of protein phosphatase 2A (PP2A) that plays a key role in cell cycle by controlling mitosis entry and exit. Involved in chromosome clustering during late mitosis by mediating dephosphorylation of MKI67. The activity of PP2A complexes containing PPP2R2D (PR55-delta) fluctuate during the cell cycle: the activity is high in interphase and low in mitosis. The chain is Serine/threonine-protein phosphatase 2A 55 kDa regulatory subunit B delta isoform (Ppp2r2d) from Rattus norvegicus (Rat).